The following is a 125-amino-acid chain: Apoptosis inhibitor Rv3655c (125 aa).

An N-terminal signal peptide occupies residues 1 to 33 (MEAALAIATLVLVLVLCLAGVTAVSMQVRCIDA).

In terms of assembly, interacts with human E3 ubiquitin-protein ligase RNF213.

It localises to the secreted. The protein resides in the host cytoplasm. Effector protein that participates in the suppression of macrophage apoptosis by blocking the extrinsic pathway. Interferes with caspase-8 activation and binds to the host E3 ubiquitin-protein ligase RNF213, whose fusion partners have anti-apoptotic function. In Mycobacterium tuberculosis (strain ATCC 25618 / H37Rv), this protein is Apoptosis inhibitor Rv3655c.